A 208-amino-acid chain; its full sequence is Protein-L-isoaspartate O-methyltransferase (208 aa).

Ser-59 is an active-site residue.

The protein belongs to the methyltransferase superfamily. L-isoaspartyl/D-aspartyl protein methyltransferase family.

It is found in the cytoplasm. It carries out the reaction [protein]-L-isoaspartate + S-adenosyl-L-methionine = [protein]-L-isoaspartate alpha-methyl ester + S-adenosyl-L-homocysteine. Catalyzes the methyl esterification of L-isoaspartyl residues in peptides and proteins that result from spontaneous decomposition of normal L-aspartyl and L-asparaginyl residues. It plays a role in the repair and/or degradation of damaged proteins. This chain is Protein-L-isoaspartate O-methyltransferase, found in Shigella sonnei (strain Ss046).